The sequence spans 450 residues: mRNA cleavage and polyadenylation factor CLP1 (450 aa).

Residues Glu29, Lys67, and 137 to 142 contribute to the ATP site; that span reads NSGKTS.

This sequence belongs to the Clp1 family. Clp1 subfamily. Component of a pre-mRNA cleavage factor complex. Interacts directly with PCF11.

It is found in the nucleus. Its function is as follows. Required for endonucleolytic cleavage during polyadenylation-dependent pre-mRNA 3'-end formation. The polypeptide is mRNA cleavage and polyadenylation factor CLP1 (Yarrowia lipolytica (strain CLIB 122 / E 150) (Yeast)).